A 124-amino-acid polypeptide reads, in one-letter code: Fluoride-specific ion channel FluC (124 aa).

Transmembrane regions (helical) follow at residues 5 to 27 (LFVA…LMLQ), 42 to 62 (ILGS…EVSP), 63 to 83 (EIKA…STFS), and 95 to 115 (LVKA…VVYL). Na(+)-binding residues include glycine 74 and threonine 77.

Belongs to the fluoride channel Fluc/FEX (TC 1.A.43) family.

The protein localises to the cell inner membrane. The catalysed reaction is fluoride(in) = fluoride(out). Na(+) is not transported, but it plays an essential structural role and its presence is essential for fluoride channel function. In terms of biological role, fluoride-specific ion channel. Important for reducing fluoride concentration in the cell, thus reducing its toxicity. In Shewanella piezotolerans (strain WP3 / JCM 13877), this protein is Fluoride-specific ion channel FluC.